Consider the following 513-residue polypeptide: Zinc finger protein 395 (513 aa).

Positions 17 to 29 (ARVLGPSASEGPS) are enriched in low complexity. The segment at 17–56 (ARVLGPSASEGPSAAPPSEPLLEGAAPQPFTTSDDTPCQE) is disordered. A compositionally biased stretch (polar residues) spans 45 to 55 (PFTTSDDTPCQ). The Nuclear export signal motif lies at 165–174 (MDEMMAAMVL). The interval 204-269 (KESGDISDSG…DPFLLDEPAP (66 aa)) is disordered. Residues 209–229 (ISDSGSSTTSGHWSGSSGVST) are compositionally biased toward low complexity. Phosphoserine is present on S248. The segment at 280-305 (YKCLWPNCGKVLRSIVGIKRHVKALH) adopts a C2H2-type zinc-finger fold. Residues 335–394 (AAAAAAAGTPVPGTPTSEPAPTPSMTGLPLSALPPPLHKAQSSGPEHPGPESSLPSGALS) are disordered. Over residues 348 to 359 (TPTSEPAPTPSM) the composition is skewed to polar residues. A phosphoserine mark is found at S376 and S449. Residues 376-391 (SSGPEHPGPESSLPSG) are compositionally biased toward low complexity.

As to quaternary structure, interacts with repression-mediating E2 binding site P2 of human papillomavirus type 8 (HPV8). Widely expressed.

It is found in the cytoplasm. Its subcellular location is the nucleus. Its function is as follows. Plays a role in papillomavirus genes transcription. The chain is Zinc finger protein 395 (ZNF395) from Homo sapiens (Human).